A 383-amino-acid chain; its full sequence is S-adenosylmethionine synthase (383 aa).

His16 is an ATP binding site. Asp18 lines the Mg(2+) pocket. K(+) is bound at residue Glu44. Glu57 and Gln98 together coordinate L-methionine. Positions 98–108 (QSPDIAMGVDI) are flexible loop. ATP contacts are provided by residues 158 to 160 (DQK), 226 to 227 (RF), Asp235, 241 to 242 (RK), Ala258, and Lys262. Asp235 contributes to the L-methionine binding site. Lys266 serves as a coordination point for L-methionine.

Belongs to the AdoMet synthase family. Homotetramer; dimer of dimers. It depends on Mg(2+) as a cofactor. The cofactor is K(+).

The protein resides in the cytoplasm. It catalyses the reaction L-methionine + ATP + H2O = S-adenosyl-L-methionine + phosphate + diphosphate. It functions in the pathway amino-acid biosynthesis; S-adenosyl-L-methionine biosynthesis; S-adenosyl-L-methionine from L-methionine: step 1/1. Catalyzes the formation of S-adenosylmethionine (AdoMet) from methionine and ATP. The overall synthetic reaction is composed of two sequential steps, AdoMet formation and the subsequent tripolyphosphate hydrolysis which occurs prior to release of AdoMet from the enzyme. The protein is S-adenosylmethionine synthase of Fusobacterium nucleatum subsp. nucleatum (strain ATCC 25586 / DSM 15643 / BCRC 10681 / CIP 101130 / JCM 8532 / KCTC 2640 / LMG 13131 / VPI 4355).